The following is a 348-amino-acid chain: Anthranilate phosphoribosyltransferase (348 aa).

5-phospho-alpha-D-ribose 1-diphosphate contacts are provided by residues glycine 91, 94–95 (GD), threonine 99, 101–104 (NIST), 119–127 (KHGNRSASG), and serine 131. Residue glycine 91 participates in anthranilate binding. Mg(2+) is bound at residue serine 103. Asparagine 122 serves as a coordination point for anthranilate. Arginine 177 lines the anthranilate pocket. Mg(2+)-binding residues include aspartate 236 and glutamate 237.

Belongs to the anthranilate phosphoribosyltransferase family. Homodimer. Mg(2+) serves as cofactor.

It catalyses the reaction N-(5-phospho-beta-D-ribosyl)anthranilate + diphosphate = 5-phospho-alpha-D-ribose 1-diphosphate + anthranilate. It functions in the pathway amino-acid biosynthesis; L-tryptophan biosynthesis; L-tryptophan from chorismate: step 2/5. Functionally, catalyzes the transfer of the phosphoribosyl group of 5-phosphorylribose-1-pyrophosphate (PRPP) to anthranilate to yield N-(5'-phosphoribosyl)-anthranilate (PRA). This is Anthranilate phosphoribosyltransferase from Synechococcus elongatus (strain ATCC 33912 / PCC 7942 / FACHB-805) (Anacystis nidulans R2).